Reading from the N-terminus, the 413-residue chain is Eukaryotic initiation factor 4A-11 (413 aa).

A Q motif motif is present at residues 40-68; the sequence is ESFDAMGLQENLLRGIYAYGFEKPSAIQQ. Positions 71 to 241 constitute a Helicase ATP-binding domain; it reads IVPFCKGLDV…RKFMNKPVRI (171 aa). 84–91 is an ATP binding site; sequence AQSGTGKT. The DEAD box signature appears at 189–192; sequence DEAD. In terms of domain architecture, Helicase C-terminal spans 252 to 413; the sequence is GIKQFYVNVD…ELPANVADLL (162 aa).

The protein belongs to the DEAD box helicase family. eIF4A subfamily. As to quaternary structure, eIF4F is a multi-subunit complex, the composition of which varies with external and internal environmental conditions. It is composed of at least EIF4A, EIF4E and EIF4G.

The enzyme catalyses ATP + H2O = ADP + phosphate + H(+). ATP-dependent RNA helicase which is a subunit of the eIF4F complex involved in cap recognition and is required for mRNA binding to ribosome. In the current model of translation initiation, eIF4A unwinds RNA secondary structures in the 5'-UTR of mRNAs which is necessary to allow efficient binding of the small ribosomal subunit, and subsequent scanning for the initiator codon. The sequence is that of Eukaryotic initiation factor 4A-11 from Nicotiana tabacum (Common tobacco).